The primary structure comprises 132 residues: Acyl-CoA thioester hydrolase YciA (132 aa).

Residues 8-123 form the HotDog ACOT-type domain; the sequence is PQGDLVLRTL…LFKYVAVDPE (116 aa).

Belongs to the acyl coenzyme A hydrolase family.

Catalyzes the hydrolysis of the thioester bond in palmitoyl-CoA and malonyl-CoA. This is Acyl-CoA thioester hydrolase YciA (yciA) from Escherichia coli O6:H1 (strain CFT073 / ATCC 700928 / UPEC).